The following is a 483-amino-acid chain: Glutamyl-tRNA(Gln) amidotransferase subunit A (483 aa).

Residues lysine 76 and serine 151 each act as charge relay system in the active site. Serine 175 (acyl-ester intermediate) is an active-site residue.

The protein belongs to the amidase family. GatA subfamily. Heterotrimer of A, B and C subunits.

It catalyses the reaction L-glutamyl-tRNA(Gln) + L-glutamine + ATP + H2O = L-glutaminyl-tRNA(Gln) + L-glutamate + ADP + phosphate + H(+). In terms of biological role, allows the formation of correctly charged Gln-tRNA(Gln) through the transamidation of misacylated Glu-tRNA(Gln) in organisms which lack glutaminyl-tRNA synthetase. The reaction takes place in the presence of glutamine and ATP through an activated gamma-phospho-Glu-tRNA(Gln). The polypeptide is Glutamyl-tRNA(Gln) amidotransferase subunit A (Pseudomonas putida (strain ATCC 700007 / DSM 6899 / JCM 31910 / BCRC 17059 / LMG 24140 / F1)).